The chain runs to 445 residues: MPVGRSLSLDPNLLAQLQSHSPTLWLNPHQGMPLPDFAPTAADLADADARLRRCAGLLAELFAELRPSGGLIASPLQPAEPLKRAARAGHAQAGAWYVKRDDALPVAGSIKARGGFHEVLALAESIAERHGLAGADTDRRALASGAARARFARHTVMVGSTGNLGLSIGMLASALGFRTVVHMSADAKAWKKARLRTRGVEVVEHAGDYAKAVDAGRRQAAGMPCCHFVDDEGSRMLFLGYATAAAELAAQLAQAGRPVDARHPLFVHLPCGVGGAPGGIVYGLKALYGEHVHAFVAEPTASPCVLVQLAGDAAHPRSVYDIGLDNRTEADGLAVAQASPLAAALLRAQAAGAFTVDDRQLFAHLLDARERLGIDLEPSAAAAFGGPAWIAGSDAGRAYLRGRGIDPDAATHVIWATGGSLVPAQEHRRFQAHARAQRQVGGAGA.

Lysine 111 carries the post-translational modification N6-(pyridoxal phosphate)lysine.

It belongs to the serine/threonine dehydratase family. DsdA subfamily. Pyridoxal 5'-phosphate is required as a cofactor.

It carries out the reaction D-serine = pyruvate + NH4(+). In Burkholderia pseudomallei (strain K96243), this protein is Probable D-serine dehydratase.